Here is a 292-residue protein sequence, read N- to C-terminus: NAD kinase (292 aa).

Residue D73 is the Proton acceptor of the active site. NAD(+) is bound by residues 73–74, 147–148, H158, R175, D177, 188–193, and Q247; these read DG, NE, and TAYSLS.

Belongs to the NAD kinase family. Requires a divalent metal cation as cofactor.

Its subcellular location is the cytoplasm. The catalysed reaction is NAD(+) + ATP = ADP + NADP(+) + H(+). Involved in the regulation of the intracellular balance of NAD and NADP, and is a key enzyme in the biosynthesis of NADP. Catalyzes specifically the phosphorylation on 2'-hydroxyl of the adenosine moiety of NAD to yield NADP. The protein is NAD kinase of Salmonella choleraesuis (strain SC-B67).